A 361-amino-acid chain; its full sequence is Phosphoserine aminotransferase (361 aa).

L-glutamate contacts are provided by Ser9 and Arg42. Residues 76–77 (AR), Trp102, Thr153, Asp173, and Gln196 contribute to the pyridoxal 5'-phosphate site. An N6-(pyridoxal phosphate)lysine modification is found at Lys197. Residue 238 to 239 (NT) participates in pyridoxal 5'-phosphate binding.

This sequence belongs to the class-V pyridoxal-phosphate-dependent aminotransferase family. SerC subfamily. As to quaternary structure, homodimer. It depends on pyridoxal 5'-phosphate as a cofactor.

It is found in the cytoplasm. The catalysed reaction is O-phospho-L-serine + 2-oxoglutarate = 3-phosphooxypyruvate + L-glutamate. It catalyses the reaction 4-(phosphooxy)-L-threonine + 2-oxoglutarate = (R)-3-hydroxy-2-oxo-4-phosphooxybutanoate + L-glutamate. It functions in the pathway amino-acid biosynthesis; L-serine biosynthesis; L-serine from 3-phospho-D-glycerate: step 2/3. The protein operates within cofactor biosynthesis; pyridoxine 5'-phosphate biosynthesis; pyridoxine 5'-phosphate from D-erythrose 4-phosphate: step 3/5. In terms of biological role, catalyzes the reversible conversion of 3-phosphohydroxypyruvate to phosphoserine and of 3-hydroxy-2-oxo-4-phosphonooxybutanoate to phosphohydroxythreonine. In Sodalis glossinidius (strain morsitans), this protein is Phosphoserine aminotransferase.